The sequence spans 472 residues: L-aspartate oxidase (472 aa).

FAD-binding positions include 7–10 (SGIA), serine 29, 36–37 (ST), 42–43 (GG), and aspartate 191. Arginine 257 acts as the Proton donor/acceptor in catalysis. FAD contacts are provided by residues glutamate 337 and 353–354 (SL).

This sequence belongs to the FAD-dependent oxidoreductase 2 family. NadB subfamily. In terms of assembly, monomer. The cofactor is FAD.

Its subcellular location is the cytoplasm. The catalysed reaction is L-aspartate + O2 = iminosuccinate + H2O2. Its pathway is cofactor biosynthesis; NAD(+) biosynthesis; iminoaspartate from L-aspartate (oxidase route): step 1/1. Its function is as follows. Catalyzes the oxidation of L-aspartate to iminoaspartate, the first step in the de novo biosynthesis of NAD(+). Can also use L-asparagine, but not L-phenylalanine, L-glutamate, glycine, L-proline, L-alanine and D-aspartate. The polypeptide is L-aspartate oxidase (Sulfurisphaera tokodaii (strain DSM 16993 / JCM 10545 / NBRC 100140 / 7) (Sulfolobus tokodaii)).